The chain runs to 514 residues: Cardiolipin synthase 2 (514 aa).

Helical transmembrane passes span Leu7–Val27, Ile41–Phe61, and Leu71–Phe91. PLD phosphodiesterase domains are found at residues Ile249 to Tyr276 and Glu427 to Ser454. Catalysis depends on residues His254, Lys256, Asp261, His432, Lys434, and Asp439.

It belongs to the phospholipase D family. Cardiolipin synthase subfamily.

Its subcellular location is the cell membrane. It catalyses the reaction 2 a 1,2-diacyl-sn-glycero-3-phospho-(1'-sn-glycerol) = a cardiolipin + glycerol. In terms of biological role, catalyzes the reversible phosphatidyl group transfer from one phosphatidylglycerol molecule to another to form cardiolipin (CL) (diphosphatidylglycerol) and glycerol. The sequence is that of Cardiolipin synthase 2 (cls2) from Bacillus anthracis.